We begin with the raw amino-acid sequence, 124 residues long: Small ribosomal subunit protein uS13 (124 aa).

The disordered stretch occupies residues 94-124 (GLPLRGQRTKNNSRTRKGKRKTVANKKKATK). Residues 100–124 (QRTKNNSRTRKGKRKTVANKKKATK) are compositionally biased toward basic residues.

Belongs to the universal ribosomal protein uS13 family. As to quaternary structure, part of the 30S ribosomal subunit. Forms a loose heterodimer with protein S19. Forms two bridges to the 50S subunit in the 70S ribosome.

In terms of biological role, located at the top of the head of the 30S subunit, it contacts several helices of the 16S rRNA. In the 70S ribosome it contacts the 23S rRNA (bridge B1a) and protein L5 of the 50S subunit (bridge B1b), connecting the 2 subunits; these bridges are implicated in subunit movement. Contacts the tRNAs in the A and P-sites. This is Small ribosomal subunit protein uS13 from Flavobacterium psychrophilum (strain ATCC 49511 / DSM 21280 / CIP 103535 / JIP02/86).